A 265-amino-acid chain; its full sequence is 3-methyl-2-oxobutanoate hydroxymethyltransferase (265 aa).

Mg(2+) is bound by residues aspartate 41 and aspartate 80. 3-methyl-2-oxobutanoate is bound by residues 41 to 42 (DS), aspartate 80, and lysine 110. Glutamate 112 contributes to the Mg(2+) binding site. Glutamate 179 (proton acceptor) is an active-site residue.

The protein belongs to the PanB family. As to quaternary structure, homodecamer; pentamer of dimers. The cofactor is Mg(2+).

The protein resides in the cytoplasm. It catalyses the reaction 3-methyl-2-oxobutanoate + (6R)-5,10-methylene-5,6,7,8-tetrahydrofolate + H2O = 2-dehydropantoate + (6S)-5,6,7,8-tetrahydrofolate. It participates in cofactor biosynthesis; (R)-pantothenate biosynthesis; (R)-pantoate from 3-methyl-2-oxobutanoate: step 1/2. Catalyzes the reversible reaction in which hydroxymethyl group from 5,10-methylenetetrahydrofolate is transferred onto alpha-ketoisovalerate to form ketopantoate. This chain is 3-methyl-2-oxobutanoate hydroxymethyltransferase, found in Pseudothermotoga lettingae (strain ATCC BAA-301 / DSM 14385 / NBRC 107922 / TMO) (Thermotoga lettingae).